Reading from the N-terminus, the 474-residue chain is tRNA-2-methylthio-N(6)-dimethylallyladenosine synthase (474 aa).

Residues 3 to 120 (KKLHIKTWGC…LPEMINHVQE (118 aa)) enclose the MTTase N-terminal domain. Residues Cys-12, Cys-49, Cys-83, Cys-157, Cys-161, and Cys-164 each coordinate [4Fe-4S] cluster. The Radical SAM core domain occupies 143-375 (RAEGPTAFVS…QQRISQQAME (233 aa)). Positions 378 to 441 (RKMVGTVQRV…ASSLRGILLR (64 aa)) constitute a TRAM domain.

The protein belongs to the methylthiotransferase family. MiaB subfamily. As to quaternary structure, monomer. [4Fe-4S] cluster serves as cofactor.

It localises to the cytoplasm. The catalysed reaction is N(6)-dimethylallyladenosine(37) in tRNA + (sulfur carrier)-SH + AH2 + 2 S-adenosyl-L-methionine = 2-methylsulfanyl-N(6)-dimethylallyladenosine(37) in tRNA + (sulfur carrier)-H + 5'-deoxyadenosine + L-methionine + A + S-adenosyl-L-homocysteine + 2 H(+). Functionally, catalyzes the methylthiolation of N6-(dimethylallyl)adenosine (i(6)A), leading to the formation of 2-methylthio-N6-(dimethylallyl)adenosine (ms(2)i(6)A) at position 37 in tRNAs that read codons beginning with uridine. The sequence is that of tRNA-2-methylthio-N(6)-dimethylallyladenosine synthase from Yersinia pseudotuberculosis serotype O:3 (strain YPIII).